Here is a 97-residue protein sequence, read N- to C-terminus: Aspartyl/glutamyl-tRNA(Asn/Gln) amidotransferase subunit C (97 aa).

Belongs to the GatC family. In terms of assembly, heterotrimer of A, B and C subunits.

The enzyme catalyses L-glutamyl-tRNA(Gln) + L-glutamine + ATP + H2O = L-glutaminyl-tRNA(Gln) + L-glutamate + ADP + phosphate + H(+). It carries out the reaction L-aspartyl-tRNA(Asn) + L-glutamine + ATP + H2O = L-asparaginyl-tRNA(Asn) + L-glutamate + ADP + phosphate + 2 H(+). In terms of biological role, allows the formation of correctly charged Asn-tRNA(Asn) or Gln-tRNA(Gln) through the transamidation of misacylated Asp-tRNA(Asn) or Glu-tRNA(Gln) in organisms which lack either or both of asparaginyl-tRNA or glutaminyl-tRNA synthetases. The reaction takes place in the presence of glutamine and ATP through an activated phospho-Asp-tRNA(Asn) or phospho-Glu-tRNA(Gln). In Thermosynechococcus vestitus (strain NIES-2133 / IAM M-273 / BP-1), this protein is Aspartyl/glutamyl-tRNA(Asn/Gln) amidotransferase subunit C.